The chain runs to 312 residues: Pyridoxal kinase (312 aa).

Methionine 1 is modified (N-acetylmethionine). Residues serine 12 and threonine 47 each coordinate pyridoxal. Threonine 47 is a pyridoxal 5'-phosphate binding site. Serine 59 carries the phosphoserine modification. Aspartate 113 provides a ligand contact to ATP. Aspartate 113 contributes to the Na(+) binding site. Residue aspartate 118 coordinates Mg(2+). A Na(+)-binding site is contributed by threonine 148. ATP is bound by residues 150-153 (NQFE) and 186-187 (TS). A Na(+)-binding site is contributed by threonine 186. Serine 213 is modified (phosphoserine). Residues 226 to 228 (VDA) and threonine 233 each bind ATP. Position 234–235 (234–235 (GD)) interacts with pyridoxal 5'-phosphate. Aspartate 235 serves as the catalytic Proton acceptor. A Phosphoserine modification is found at serine 285.

This sequence belongs to the pyridoxine kinase family. Homodimer. It depends on Zn(2+) as a cofactor. Mg(2+) is required as a cofactor.

The protein localises to the cytoplasm. Its subcellular location is the cytosol. The enzyme catalyses pyridoxal + ATP = pyridoxal 5'-phosphate + ADP + H(+). It carries out the reaction pyridoxamine + ATP = pyridoxamine 5'-phosphate + ADP + H(+). It catalyses the reaction pyridoxine + ATP = pyridoxine 5'-phosphate + ADP + H(+). The protein operates within cofactor metabolism; pyridoxal 5'-phosphate salvage; pyridoxal 5'-phosphate from pyridoxal: step 1/1. Its pathway is cofactor metabolism; pyridoxal 5'-phosphate salvage; pyridoxine 5'-phosphate from pyridoxine: step 1/1. It functions in the pathway cofactor metabolism; pyridoxal 5'-phosphate salvage; pyridoxamine 5'-phosphate from pyridoxamine: step 1/1. Its activity is regulated as follows. Activity is increased in the presence of K(+)or Na(+). Functionally, catalyzes the phosphorylation of the dietary vitamin B6 vitamers pyridoxal (PL), pyridoxine (PN) and pyridoxamine (PM) to form pyridoxal 5'-phosphate (PLP), pyridoxine 5'-phosphate (PNP) and pyridoxamine 5'-phosphate (PMP), respectively. PLP is the active form of vitamin B6, and acts as a cofactor for over 140 different enzymatic reactions. In Bos taurus (Bovine), this protein is Pyridoxal kinase (PDXK).